Consider the following 291-residue polypeptide: Putative phosphatase MG263 (291 aa).

D11 (nucleophile) is an active-site residue. D11 is a binding site for Mg(2+). L12 serves as a coordination point for phosphate. A Mg(2+)-binding site is contributed by D13. Residues 60 to 61 (TG) and K217 each bind phosphate. Residue D241 coordinates Mg(2+). N244 provides a ligand contact to phosphate.

The protein belongs to the HAD-like hydrolase superfamily. Cof family. The cofactor is Mg(2+).

The polypeptide is Putative phosphatase MG263 (Mycoplasma genitalium (strain ATCC 33530 / DSM 19775 / NCTC 10195 / G37) (Mycoplasmoides genitalium)).